The chain runs to 266 residues: Transcription factor BIP1 (266 aa).

Positions 1 to 73 (MAMYMPSTAS…DREAQRAIRA (73 aa)) are disordered. Composition is skewed to polar residues over residues 7 to 22 (STAS…SGTP) and 47 to 56 (RSVSTLTPSQ). Positions 54 to 95 (PSQLARKRANDREAQRAIRARTKEHIERLEREVEELKSKQNR) constitute a bZIP domain. The segment at 59-81 (RKRANDREAQRAIRARTKEHIER) is basic motif. A compositionally biased stretch (basic and acidic residues) spans 61 to 73 (RANDREAQRAIRA). The segment at 82–89 (LEREVEEL) is leucine-zipper.

This sequence belongs to the bZIP family. As to expression, expressed in appressoria.

It is found in the nucleus. Its function is as follows. Transcription factor that is required for infection of plants hosts. Is not implicated in the development of appressoria or the subsequent penetration of host leaves, but is necessary for the initial establishment of the fungus within plant cells by orchestrating the expression of a unique set of early invasion-related genes within appressoria, encoding secreted effectors, enzymes, secondary metabolism-related enzymes, and signaling membrane receptors. Controls the expression of targeted genes by interacting directly with a 5'-TGACTC-3' motif present in their promoters. This Pyricularia oryzae (strain 70-15 / ATCC MYA-4617 / FGSC 8958) (Rice blast fungus) protein is Transcription factor BIP1.